We begin with the raw amino-acid sequence, 294 residues long: Beta-lactamase SME-1 (294 aa).

The N-terminal stretch at Met1–Ala27 is a signal peptide. Residues Cys72 and Cys242 are joined by a disulfide bond. The active-site Nucleophile; acyl-ester intermediate is the Ser73. Residues Ser73, Lys76, Ser133, and Asn135 each coordinate a beta-lactam. Glu172 acts as the Proton acceptor in catalysis. Residue Thr239 coordinates a beta-lactam.

It belongs to the class-A beta-lactamase family.

It catalyses the reaction a beta-lactam + H2O = a substituted beta-amino acid. Partially inhibited by the beta-lactamase-blocking agents, clavulanic acid and tazobactam. Not inhibited by EDTA. Class A beta-lactamase which confers resistance to the beta-lactam antibiotics, including penicillins, some cephalosporins and carbapenems, to JM109 strain E.coli. Acts via hydrolysis of the beta-lactam ring. Has penicillin-, cephalosporin- and carbapenem-hydrolyzing activities. This Serratia marcescens protein is Beta-lactamase SME-1.